The sequence spans 3056 residues: Genome polyprotein (3056 aa).

Residues 139-284 (LKGQHTIHYV…GRDMSTIREF (146 aa)) form the Peptidase S30 domain. Residues His-192, Asp-201, and Ser-232 each act as for P1 proteinase activity in the active site. The Involved in interaction with stylet and aphid transmission signature appears at 335–338 (RITC). The short motif at 593–595 (PTK) is the Involved in virions binding and aphid transmission element. Residues 619–741 (MYIAKDGFCH…ESELKYYRVG (123 aa)) enclose the Peptidase C6 domain. Catalysis depends on for helper component proteinase activity residues Cys-627 and His-700. Residues 1214–1366 (EIAHNDAHDI…TQYPVTLVTE (153 aa)) enclose the Helicase ATP-binding domain. 1227-1234 (GAVGSGKS) provides a ligand contact to ATP. A DECH box motif is present at residues 1316 to 1319 (DECH). A Helicase C-terminal domain is found at 1385–1544 (DMLDVCDNIL…GLPVMAEGVT (160 aa)). Positions 1871–1878 (KKGKVRGT) match the Nuclear localization signal motif. An O-(5'-phospho-RNA)-tyrosine modification is found at Tyr-1893. The region spanning 2022 to 2240 (SLSKIGGLRD…IGWDGIKIVD (219 aa)) is the Peptidase C4 domain. Residues His-2067, Asp-2102, and Cys-2172 each act as for nuclear inclusion protein A activity in the active site. One can recognise a RdRp catalytic domain in the interval 2507 to 2630 (WVYCDADGSQ…AIKPECESYL (124 aa)). The interval 2788–2820 (QLNAGEEKKDKRKKNEGDPNKDSEGQSVRQIVP) is disordered. Positions 2792–2811 (GEEKKDKRKKNEGDPNKDSE) are enriched in basic and acidic residues. Thr-3040 carries the phosphothreonine modification.

This sequence belongs to the potyviridae genome polyprotein family. In terms of assembly, interacts with host eIF4E protein (via cap-binding region); this interaction mediates the translation of the VPg-viral RNA conjugates. Part of a complex that comprises VPg, RNA, host EIF4E and EIF4G; this interaction mediates the translation of the VPg-viral RNA conjugates. Post-translationally, VPg is uridylylated by the polymerase and is covalently attached to the 5'-end of the genomic RNA. This uridylylated form acts as a nucleotide-peptide primer for the polymerase. Potyviral RNA is expressed as two polyproteins which undergo post-translational proteolytic processing. Genome polyprotein is processed by NIa-pro, P1 and HC-pro proteinases resulting in the production of at least ten individual proteins. P3N-PIPO polyprotein is cleaved by P1 and HC-pro proteinases resulting in the production of three individual proteins. The P1 proteinase and the HC-pro cleave only their respective C-termini autocatalytically. 6K1 is essential for proper proteolytic separation of P3 from CI.

The protein resides in the host cytoplasmic vesicle. It is found in the host nucleus. Its subcellular location is the virion. It carries out the reaction RNA(n) + a ribonucleoside 5'-triphosphate = RNA(n+1) + diphosphate. The catalysed reaction is Hydrolyzes glutaminyl bonds, and activity is further restricted by preferences for the amino acids in P6 - P1' that vary with the species of potyvirus, e.g. Glu-Xaa-Xaa-Tyr-Xaa-Gln-|-(Ser or Gly) for the enzyme from tobacco etch virus. The natural substrate is the viral polyprotein, but other proteins and oligopeptides containing the appropriate consensus sequence are also cleaved.. The enzyme catalyses Hydrolyzes a Gly-|-Gly bond at its own C-terminus, commonly in the sequence -Tyr-Xaa-Val-Gly-|-Gly, in the processing of the potyviral polyprotein.. In terms of biological role, required for aphid transmission and also has proteolytic activity. Only cleaves a Gly-Gly dipeptide at its own C-terminus. Interacts with virions and aphid stylets. Acts as a suppressor of RNA-mediated gene silencing, also known as post-transcriptional gene silencing (PTGS), a mechanism of plant viral defense that limits the accumulation of viral RNAs. May have RNA-binding activity. Its function is as follows. Has helicase activity. It may be involved in replication. Indispensable for virus replication. Reduces the abundance of host transcripts related to jasmonic acid biosynthesis therefore altering the host defenses. In order to increase its own stability, decreases host protein degradation pathways. Functionally, indispensable for virus replication. In terms of biological role, mediates the cap-independent, EIF4E-dependent translation of viral genomic RNAs. Binds to the cap-binding site of host EIF4E and thus interferes with the host EIF4E-dependent mRNA export and translation. VPg-RNA directly binds EIF4E and is a template for transcription. Also forms trimeric complexes with EIF4E-EIF4G, which are templates for translation. Its function is as follows. Has RNA-binding and proteolytic activities. An RNA-dependent RNA polymerase that plays an essential role in the virus replication. Functionally, involved in aphid transmission, cell-to-cell and systemis movement, encapsidation of the viral RNA and in the regulation of viral RNA amplification. This Arachis hypogaea (Peanut) protein is Genome polyprotein.